We begin with the raw amino-acid sequence, 142 residues long: Midkine-B (142 aa).

The signal sequence occupies residues 1-20 (MELRAFCVILLITILAVSSQ). 5 disulfides stabilise this stretch: Cys36/Cys60, Cys44/Cys69, Cys51/Cys73, Cys83/Cys115, and Cys93/Cys125.

Belongs to the pleiotrophin family. In adults, expression is highest in the brain, eye and bone, with lower expression in the heart and lung. Not expressed in the ovary. In the tailbud stage embryo, expressed in the head and tail regions as well as in the central nervous system (CNS).

The protein localises to the secreted. Functionally, secreted protein that functions as a cytokine and growth factor and mediates its signal through cell-surface proteoglycan and non-proteoglycan receptors. Binds cell-surface proteoglycan receptors via their chondroitin sulfate (CS) groups. Thereby regulates many processes like inflammatory response, cell proliferation, cell adhesion, cell growth, cell survival, tissue regeneration, cell differentiation and cell migration. Inhibits mesoderm formation and promotes neural formation during development. Plays a role in development of the neuromuscular junction (NMJ). Has antibacterial activity against both Gram-positive and Gram-negative bacteria. The polypeptide is Midkine-B (mdk-b) (Xenopus laevis (African clawed frog)).